A 137-amino-acid polypeptide reads, in one-letter code: Putative nucleoside diphosphate kinase (137 aa).

Residues phenylalanine 45, arginine 73, threonine 79, arginine 90, and asparagine 100 each coordinate ATP. Histidine 103 functions as the Pros-phosphohistidine intermediate in the catalytic mechanism.

The protein belongs to the NDK family. The cofactor is Mg(2+).

It catalyses the reaction a 2'-deoxyribonucleoside 5'-diphosphate + ATP = a 2'-deoxyribonucleoside 5'-triphosphate + ADP. It carries out the reaction a ribonucleoside 5'-diphosphate + ATP = a ribonucleoside 5'-triphosphate + ADP. Its function is as follows. Major role in the synthesis of nucleoside triphosphates other than ATP. The ATP gamma phosphate is transferred to the NDP beta phosphate via a ping-pong mechanism, using a phosphorylated active-site intermediate. This is Putative nucleoside diphosphate kinase (NME2P1) from Homo sapiens (Human).